The following is a 3112-amino-acid chain: MSSKKMMWVPKSAHKAPVVSREPVIRKKEWVARQIPKYIPVSNPSDCRDEISQTLLHFDSEEAVYDFVWRFPMGSIFWDTNGRIKPVVNCLLRATRMNLDYDVAADVYVCRDCLSCASSYMYFSNYHYDCRELRENHEAVVSCKYEQHIVSTFDVFPRYCTQEIEQNVVNWMTETLERYDNEPLRIEKQLQFYNHKTEQMESRVQEVQVTTAEYAVSDTYVPQQLSRKGSVSAKLTQRRANKIIMRTHEVENLIRETIDLCDERQIPITFVDVKHKRCLPRIPLRHMQAKPDISEIVEQGDMYNEVGQFIEQYQNLAEPFRVIRDYEVTRGWSGVILHRDDLALDPQTQARCLNNLFVVMGRCEHGHLQNALRPDCLEGLTYYSDTFGKVFNESLVKHHPGKHQFRIGSRTDYEWEELAMWVNAVCPVSFRCADCRPPQSLNEYIENIRMSKAMAELAGRQDALSKTLHKWTTMLISSVLTTEIRARDNLEPIQERIFTRNMPLGPLYDVAGAMNRAVIDIQTAVQNMQLSIGNSNMNEQQRNQTLLNEINKIKQHSFMQTKEMLSRFENIAQTYQNIISSASQPLSIHSMRQLMMDSRMDESFEFDIMRKKGSIASIAPMAFRTFEDIYSQPGVYNQKWLNLTPSGRFQTDIDYLRLDLPIDVIQKKKHVVNRNEIKEETCYVIVGQVNVSFCEVVARCFVPIPHVLRVGSPQNPTMIKIQDQEGGKTLVPKSGFCYVLQLVLMLGYVPDQLTAAFVKDVGIVVESLGPWPLFVDYLGAIKNLIIRYPTTIKAPTALHIVDHVDTVIHVMTTLGCVNKGEHYLTLQSVAQLHDAAMTVNIETFKDYRIGGVVPQLKHMLQSEEHMLEVLEAKPQWLVHLLLSPTQIWALSQSVVKYQVIHKVMTSNPDLAVALAQLVAISSNFSIFKNTEHVIQKYFEVSKQLQNVSGVILGEHNEYFETAFAQYSALRFSTDVVLLMDQFSTRKKTLDDLEDYYRKTIPSILIECGLLGPSDFGWRKRLVRGVVDRGSGLKSTVKSLGSFSTKEKWISWSGLGSGTITCVKFPFVCLQRSGSWLYSSTKTTAFNAVWMAGIKCVKSNVRSILLDSALYGAITLALLCAIKLIRKAFRFVEGLIKEDTSDDEDYVLHAKAASDSLYIQCLAWLALVVGCFNSGLANDIYFSTTKYRTLLDMVKTAHSDSFVFHAGDEEEGEIVELITRDNFVDYVYNHSDPLMEFDSETLLGWYTRISYQGRVLEHPLRVGTNCHLTRENVDEIAKNIATGAGNEFIVVGDVGSGKSTKLPIAVSTYGPVLILVPSRELVNNLCSSIWHVGKKQASTYMMNCITRGTSNISIMTYGYALALFSHCPIELQKYRFIQMDECHEFSSHMITFYSWWRESGKFTKLFKTTATPPGTVIKGGCVPTNHKVDVIEIRDVSVEEFCRRSIDSHAEGLRSLMPNGGRVIMFVPSRRECELARSSLISIPGARTWVVYRAAATQATKLVAELADDKHYFQIIITTTVLQNGVNLDPDCVVDFGQTFEAAYDRDSRQLGVRRRNINPGELIQRVGRVGRNKPGKFIQVGKRLEHEVVPNSCCVTDAILMSFTLELAPFISSHLIDEVNFVTREQVRTAMKFSAPLLFMIHYVRRDGRMLNGYYQQLKGLLLQTSDVALCDTLVGDAETNSFLTLRQYQLRGIIEAQEVLPDLPIPFYSSEFALPFYLEIGQITKEAIRARSFTLRIKTPDVKKAVMRLSTSATQIDQTIGILRTRLQLTRERLSKFSELKATAHNLRLTPIFNTCFDMGAAKSESTLRASLTAGEELLSALELARTEKSDKALEKLILDNPVLGDCLVFHGGPEEYFDQTLFQTSTGLINKYTVGIACLTVGLGCTIWYYLKKREKYVMHGKVHTRETGLTTNHLFVPGMKEHIQEWTGGDHEIGNRFGEAYKRRFIGRQPTEEQKLSKEKWDKREGQQTSVYKTLYDLDPTKFKYVVVECPDFDLKKKLNRQEKKQLDTTIVEACRTRMLDKGQHDFKDVERATVYLFNDNGVGHKVQLTPHNPLAVSRTTTHPVGFPAEAGRLRQTGQAMEMTPEELEKALDDNYVPHSRCQIDISHLHRHLAIVNTGGMSTQCFITQTMCVAPYHLAMGFKDNTKLTIYCSNGVYVMPVPKVEKMENMDLVVFRMPQDFPPLKRCATIREPKSSDEVTLITGKRTTHGIQLQFSKVVSIDRKSDTVWKYMIDSVPGVCGGMVMCVEDGCVVGFHSAAAIRNKVSNGSIFTPVTPQLLDSLQSSEGHLFDWYFNDDLISWKGVPTNMDPRNFPVSETISEFIFHNDSKGHGTDKYYGENLTIEGRVLQSFNTRHVVKGLDDAFAEYVNKFGEPPADTFTHLPSDLSSDAFYKDFMKYSTPVEVGTVNIENFEKAVQAVVELLEQQGFEQGEFSPEMDFYKILNSFNLDTAMGALYQCKKKDVLPMASHEQLATWFWNSLENLATGKLGLWKASLKAELRPKEKVLEKKTRVFTAAPFDVSFGAKAFVDDFNNKFYATQAGSNWTVGINKFNCGWDELARRFNPDWKFIDADGSRYDSSLTPLLFNAVLRIRQHFLRANGFERRMLSNFYTQLVWTPISTITGQIVKKNKGGPSGQPSTVVDNTMMLMIAVEYAKLQYGVTDLKYVCNGDDLILNAPQGVCETIRANFSHSFKELGLTYEFEQEVDSIDQVEYMSHKWIDCGGVLIPKLKPERIVSVLQWNKSLDLASQANKINAAWIESFGYGDLSKFIREYANWWGERNGQVGFLCSEEKVASLYLTNDVTIHTEEHDEFVFHSGADQSGVVKDQTGDKAEGSGTKTEDPPNQTTDPVNNPSNGGNKDAPQNLNATVVTKSYTYIPPIMKSLVTIDTAKKMADYTPPDALISTQACTLEQFGRWANAAANGLGLSMQAFQTDVVPYWIYWCIVNSASDEHKKLSSWTKVNMTIDDATGQINLNEGEAQTIYEMSPMFDEAKPTLRAVMRHFGALAYRWVKFSIAKRKPIIPHNAIKAGLMDVTYFPCCIDFVTVDQLSPQEQNVRNQVINARVSDTPRALFKHAQRAGAGEEDTNLRRDDDANYGRTRVGGAMFGTR.

Positions 234 to 383 (KLTQRRANKI…PDCLEGLTYY (150 aa)) constitute a Peptidase S30 domain. Residues H286, D301, and S333 each act as for P1 proteinase activity in the active site. The region spanning 729–850 (TLVPKSGFCY…IETFKDYRIG (122 aa)) is the Peptidase C6 domain. Residues C737 and H809 each act as for helper component proteinase activity in the active site. The 152-residue stretch at 1278–1429 (NIATGAGNEF…CVPTNHKVDV (152 aa)) folds into the Helicase ATP-binding domain. 1291–1298 (GDVGSGKS) provides a ligand contact to ATP. The DECH box motif lies at 1379–1382 (DECH). A Helicase C-terminal domain is found at 1444–1627 (SIDSHAEGLR…EVNFVTREQV (184 aa)). Positions 2096 to 2311 (DDNYVPHSRC…ISWKGVPTNM (216 aa)) constitute a Peptidase C4 domain. Catalysis depends on for nuclear inclusion protein A activity residues H2140, D2174, and C2243. The region spanning 2569–2687 (WKFIDADGSR…NAPQGVCETI (119 aa)) is the RdRp catalytic domain. The interval 2818 to 2867 (HSGADQSGVVKDQTGDKAEGSGTKTEDPPNQTTDPVNNPSNGGNKDAPQN) is disordered. The segment covering 2830-2844 (QTGDKAEGSGTKTED) has biased composition (basic and acidic residues). Residues 2845–2867 (PPNQTTDPVNNPSNGGNKDAPQN) show a composition bias toward polar residues.

It belongs to the potyviridae genome polyprotein family. Post-translationally, VPg is uridylylated by the polymerase and is covalently attached to the 5'-end of the genomic RNA. This uridylylated form acts as a nucleotide-peptide primer for the polymerase. Genome polyprotein of potyviruses undergoes post-translational proteolytic processing by the main proteinase NIa-pro resulting in the production of at least ten individual proteins. The P1 proteinase and the HC-pro cleave only their respective C-termini autocatalytically. 6K1 is essential for proper proteolytic separation of P3 from CI.

Its subcellular location is the host cytoplasmic vesicle. It is found in the virion. The enzyme catalyses RNA(n) + a ribonucleoside 5'-triphosphate = RNA(n+1) + diphosphate. The catalysed reaction is Hydrolyzes glutaminyl bonds, and activity is further restricted by preferences for the amino acids in P6 - P1' that vary with the species of potyvirus, e.g. Glu-Xaa-Xaa-Tyr-Xaa-Gln-|-(Ser or Gly) for the enzyme from tobacco etch virus. The natural substrate is the viral polyprotein, but other proteins and oligopeptides containing the appropriate consensus sequence are also cleaved.. It catalyses the reaction Hydrolyzes a Gly-|-Gly bond at its own C-terminus, commonly in the sequence -Tyr-Xaa-Val-Gly-|-Gly, in the processing of the potyviral polyprotein.. Required for aphid transmission and also has proteolytic activity. Only cleaves a Gly-Gly dipeptide at its own C-terminus. Interacts with virions and aphid stylets. Acts as a suppressor of RNA-mediated gene silencing, also known as post-transcriptional gene silencing (PTGS), a mechanism of plant viral defense that limits the accumulation of viral RNAs. May have RNA-binding activity. Its function is as follows. Has helicase activity. It may be involved in replication. Functionally, indispensable for virus replication. In terms of biological role, mediates the cap-independent, EIF4E-dependent translation of viral genomic RNAs. Binds to the cap-binding site of host EIF4E and thus interferes with the host EIF4E-dependent mRNA export and translation. VPg-RNA directly binds EIF4E and is a template for transcription. Also forms trimeric complexes with EIF4E-EIF4G, which are templates for translation. Has RNA-binding and proteolytic activities. Its function is as follows. An RNA-dependent RNA polymerase that plays an essential role in the virus replication. Functionally, involved in aphid transmission, cell-to-cell and systemis movement, encapsidation of the viral RNA and in the regulation of viral RNA amplification. In Triticum aestivum (Wheat), this protein is Genome polyprotein.